Here is a 299-residue protein sequence, read N- to C-terminus: Ornithine carbamoyltransferase (299 aa).

Carbamoyl phosphate contacts are provided by residues S52–T55, Q79, R103, and H130–Q133. Residues N161, D218, and S222–M223 each bind L-ornithine. Carbamoyl phosphate contacts are provided by residues C258–L259 and R286.

The protein belongs to the aspartate/ornithine carbamoyltransferase superfamily. OTCase family.

It is found in the cytoplasm. The enzyme catalyses carbamoyl phosphate + L-ornithine = L-citrulline + phosphate + H(+). It functions in the pathway amino-acid biosynthesis; L-arginine biosynthesis; L-arginine from L-ornithine and carbamoyl phosphate: step 1/3. In terms of biological role, reversibly catalyzes the transfer of the carbamoyl group from carbamoyl phosphate (CP) to the N(epsilon) atom of ornithine (ORN) to produce L-citrulline. This Ruthia magnifica subsp. Calyptogena magnifica protein is Ornithine carbamoyltransferase.